A 90-amino-acid polypeptide reads, in one-letter code: Small ribosomal subunit protein uS15 (90 aa).

This sequence belongs to the universal ribosomal protein uS15 family. Part of the 30S ribosomal subunit. Forms a bridge to the 50S subunit in the 70S ribosome, contacting the 23S rRNA.

Functionally, one of the primary rRNA binding proteins, it binds directly to 16S rRNA where it helps nucleate assembly of the platform of the 30S subunit by binding and bridging several RNA helices of the 16S rRNA. Its function is as follows. Forms an intersubunit bridge (bridge B4) with the 23S rRNA of the 50S subunit in the ribosome. This is Small ribosomal subunit protein uS15 from Campylobacter jejuni subsp. doylei (strain ATCC BAA-1458 / RM4099 / 269.97).